Consider the following 315-residue polypeptide: Endolytic peptidoglycan transglycosylase RlpA (315 aa).

A signal peptide spans 1–19 (MGLALEKVCFLGVIFLISA). A lipid anchor (N-palmitoyl cysteine) is attached at cysteine 20. A lipid anchor (S-diacylglycerol cysteine) is attached at cysteine 20. Residues 68–79 (SDSQDSNTKDQP) show a composition bias toward basic and acidic residues. Residues 68–92 (SDSQDSNTKDQPLDNGMRDSSSIQR) form a disordered region. In terms of domain architecture, SPOR spans 242–315 (SVSGGKFSLQ…YNQNAVLTRE (74 aa)).

This sequence belongs to the RlpA family.

It localises to the cell membrane. In terms of biological role, lytic transglycosylase with a strong preference for naked glycan strands that lack stem peptides. The chain is Endolytic peptidoglycan transglycosylase RlpA from Helicobacter pylori (strain ATCC 700392 / 26695) (Campylobacter pylori).